The chain runs to 131 residues: Probable ATP synthase subunit g 2, mitochondrial (131 aa).

It belongs to the ATPase g subunit family. Subunit of the F-type ATPase which has 2 components, CF(1) - the catalytic core - and CF(0) - the membrane proton channel.

The protein localises to the mitochondrion membrane. Functionally, mitochondrial membrane ATP synthase (F(1)F(0) ATP synthase or Complex V) produces ATP from ADP in the presence of a proton gradient across the membrane which is generated by electron transport complexes of the respiratory chain. F-type ATPases consist of two structural domains, F(1) - containing the extramembraneous catalytic core, and F(0) - containing the membrane proton channel, linked together by a central stalk and a peripheral stalk. During catalysis, ATP synthesis in the catalytic domain of F(1) is coupled via a rotary mechanism of the central stalk subunits to proton translocation. Part of the complex F(0) domain. Minor subunit located with subunit a in the membrane. The chain is Probable ATP synthase subunit g 2, mitochondrial from Caenorhabditis elegans.